Consider the following 98-residue polypeptide: Protein translation factor SUI1 homolog (98 aa).

The protein belongs to the SUI1 family.

The chain is Protein translation factor SUI1 homolog from Thermococcus onnurineus (strain NA1).